Here is a 134-residue protein sequence, read N- to C-terminus: Small ribosomal subunit protein uS11 (134 aa).

The segment at 115–134 (TPIPHNGTRPPKKVLKRDLK) is disordered. Basic residues predominate over residues 124 to 134 (PPKKVLKRDLK).

It belongs to the universal ribosomal protein uS11 family. As to quaternary structure, part of the 30S ribosomal subunit. Interacts with proteins S7 and S18. Binds to IF-3.

Located on the platform of the 30S subunit, it bridges several disparate RNA helices of the 16S rRNA. Forms part of the Shine-Dalgarno cleft in the 70S ribosome. This is Small ribosomal subunit protein uS11 from Mycoplasma mobile (strain ATCC 43663 / 163K / NCTC 11711) (Mesomycoplasma mobile).